We begin with the raw amino-acid sequence, 459 residues long: Limonoid 7-O-acetyltransferse (459 aa).

Residues His-167 and Asp-391 each act as proton acceptor in the active site.

It belongs to the plant acyltransferase family. Monomer. In terms of tissue distribution, expressed in maturing fruits and in juice vesicles.

It catalyses the reaction (1S)-1-acetoxy-luvungin A + acetyl-CoA = (1S)-1,7-diacetoxy-luvungin A + CoA. It participates in secondary metabolite biosynthesis; terpenoid biosynthesis. Functionally, acetyltransferase involved in the biosynthesis of limonoids triterpene natural products such as limonin, a compound with insecticidal activity responsible for the bitter taste in citrus. Catalyzes the formation of (1S)-1,7-diacetoxy-luvungin A from (1S)-1-acetoxy-luvungin A. The polypeptide is Limonoid 7-O-acetyltransferse (Citrus sinensis (Sweet orange)).